Consider the following 232-residue polypeptide: N-(5'-phosphoribosyl)anthranilate isomerase (232 aa).

Belongs to the TrpF family.

The enzyme catalyses N-(5-phospho-beta-D-ribosyl)anthranilate = 1-(2-carboxyphenylamino)-1-deoxy-D-ribulose 5-phosphate. It participates in amino-acid biosynthesis; L-tryptophan biosynthesis; L-tryptophan from chorismate: step 3/5. The polypeptide is N-(5'-phosphoribosyl)anthranilate isomerase (TRP1) (Lipomyces starkeyi (Oleaginous yeast)).